The following is a 436-amino-acid chain: Trigger factor (436 aa).

Positions 163 to 248 (GDRVVLDFAG…VKEVAEGVLP (86 aa)) constitute a PPIase FKBP-type domain.

It belongs to the FKBP-type PPIase family. Tig subfamily.

Its subcellular location is the cytoplasm. The catalysed reaction is [protein]-peptidylproline (omega=180) = [protein]-peptidylproline (omega=0). Its function is as follows. Involved in protein export. Acts as a chaperone by maintaining the newly synthesized protein in an open conformation. Functions as a peptidyl-prolyl cis-trans isomerase. This Bordetella parapertussis (strain 12822 / ATCC BAA-587 / NCTC 13253) protein is Trigger factor.